We begin with the raw amino-acid sequence, 81 residues long: Sulfur carrier protein TusA (81 aa).

Catalysis depends on cysteine 19, which acts as the Cysteine persulfide intermediate.

It belongs to the sulfur carrier protein TusA family.

It is found in the cytoplasm. In terms of biological role, sulfur carrier protein which probably makes part of a sulfur-relay system. This Shewanella frigidimarina (strain NCIMB 400) protein is Sulfur carrier protein TusA.